A 424-amino-acid polypeptide reads, in one-letter code: UDP-N-acetylglucosamine 1-carboxyvinyltransferase (424 aa).

Phosphoenolpyruvate is bound at residue 22 to 23; that stretch reads KN. Arginine 98 is a binding site for UDP-N-acetyl-alpha-D-glucosamine. Residue cysteine 122 is the Proton donor of the active site. 2-(S-cysteinyl)pyruvic acid O-phosphothioketal is present on cysteine 122. UDP-N-acetyl-alpha-D-glucosamine-binding positions include 127–131, aspartate 312, and isoleucine 334; that span reads RPVDQ.

The protein belongs to the EPSP synthase family. MurA subfamily.

It localises to the cytoplasm. The enzyme catalyses phosphoenolpyruvate + UDP-N-acetyl-alpha-D-glucosamine = UDP-N-acetyl-3-O-(1-carboxyvinyl)-alpha-D-glucosamine + phosphate. The protein operates within cell wall biogenesis; peptidoglycan biosynthesis. Cell wall formation. Adds enolpyruvyl to UDP-N-acetylglucosamine. The protein is UDP-N-acetylglucosamine 1-carboxyvinyltransferase of Xanthomonas campestris pv. campestris (strain B100).